A 341-amino-acid chain; its full sequence is HTH-type transcriptional repressor PurR (341 aa).

The HTH lacI-type domain maps to alanine 2–valine 56. A DNA-binding region (H-T-H motif) is located at residues isoleucine 4–asparagine 23. The DNA-binding element occupies serine 48–valine 56. Residues tyrosine 73, arginine 190, threonine 192, phenylalanine 221, and aspartate 275 each contribute to the hypoxanthine site.

Homodimer.

Its pathway is purine metabolism; purine nucleotide biosynthesis [regulation]. Functionally, is the main repressor of the genes involved in the de novo synthesis of purine nucleotides, regulating purB, purC, purEK, purF, purHD, purL, purMN and guaBA expression. PurR is allosterically activated to bind its cognate DNA by binding the purine corepressors, hypoxanthine or guanine, thereby effecting transcription repression. The protein is HTH-type transcriptional repressor PurR of Photorhabdus laumondii subsp. laumondii (strain DSM 15139 / CIP 105565 / TT01) (Photorhabdus luminescens subsp. laumondii).